We begin with the raw amino-acid sequence, 158 residues long: NAD(P)H-quinone oxidoreductase subunit N (158 aa).

It belongs to the complex I NdhN subunit family. NDH-1 can be composed of about 15 different subunits; different subcomplexes with different compositions have been identified which probably have different functions.

Its subcellular location is the cellular thylakoid membrane. It carries out the reaction a plastoquinone + NADH + (n+1) H(+)(in) = a plastoquinol + NAD(+) + n H(+)(out). It catalyses the reaction a plastoquinone + NADPH + (n+1) H(+)(in) = a plastoquinol + NADP(+) + n H(+)(out). NDH-1 shuttles electrons from an unknown electron donor, via FMN and iron-sulfur (Fe-S) centers, to quinones in the respiratory and/or the photosynthetic chain. The immediate electron acceptor for the enzyme in this species is believed to be plastoquinone. Couples the redox reaction to proton translocation, and thus conserves the redox energy in a proton gradient. Cyanobacterial NDH-1 also plays a role in inorganic carbon-concentration. The protein is NAD(P)H-quinone oxidoreductase subunit N of Synechococcus elongatus (strain ATCC 33912 / PCC 7942 / FACHB-805) (Anacystis nidulans R2).